The chain runs to 86 residues: Cell division topological specificity factor (86 aa).

It belongs to the MinE family.

Its function is as follows. Prevents the cell division inhibition by proteins MinC and MinD at internal division sites while permitting inhibition at polar sites. This ensures cell division at the proper site by restricting the formation of a division septum at the midpoint of the long axis of the cell. The polypeptide is Cell division topological specificity factor (Parasynechococcus marenigrum (strain WH8102)).